A 376-amino-acid chain; its full sequence is Protein RecA (376 aa).

66–73 is an ATP binding site; it reads GPESSGKT. Residues 329–376 are disordered; sequence VGVKPEDLTAEPGADAAGAAADAEAPAKSVPAPAAKSAKGSKAAAAKS. A compositionally biased stretch (low complexity) spans 338 to 376; the sequence is AEPGADAAGAAADAEAPAKSVPAPAAKSAKGSKAAAAKS.

This sequence belongs to the RecA family.

It localises to the cytoplasm. In terms of biological role, can catalyze the hydrolysis of ATP in the presence of single-stranded DNA, the ATP-dependent uptake of single-stranded DNA by duplex DNA, and the ATP-dependent hybridization of homologous single-stranded DNAs. It interacts with LexA causing its activation and leading to its autocatalytic cleavage. The polypeptide is Protein RecA (Streptomyces rimosus).